The following is a 132-amino-acid chain: Movement protein TGB3 (132 aa).

Residues 1 to 11 are Cytoplasmic-facing; that stretch reads MVLVVKVDLSN. Residues 12 to 32 traverse the membrane as a helical segment; it reads IVLYIVAGCVVVSMLYSPFFS. The Lumenal portion of the chain corresponds to 33–109; that stretch reads NDVKASSYAG…TETLFIILSR (77 aa). Residues 110–130 form a helical membrane-spanning segment; it reads LFGLAVFLFMICLMSIVWFWC. Over 131–132 the chain is Cytoplasmic; it reads HR.

The protein belongs to the benyvirus TGB3 movement protein family. In terms of assembly, interacts with movement proteins TGB1 and TGB2.

It is found in the host cell junction. The protein resides in the host plasmodesma. The protein localises to the host endoplasmic reticulum membrane. Participates in the transport of viral RNA to the plasmodesmata. TGBp3 most probably contains signals of plasmodesmata targeting is therefore involved in the targeting of TGBp2, and viral RNAs-TGBp1 (RNP complex), to plasmodesmata. Can gate plasmodesmata and increase their size exclusion limit. The polypeptide is Movement protein TGB3 (Beta macrocarpa (Beet)).